Reading from the N-terminus, the 315-residue chain is tRNA dimethylallyltransferase (315 aa).

ATP is bound at residue 13 to 20; the sequence is GPTAVGKT. Residue 15 to 20 participates in substrate binding; it reads TAVGKT. The tract at residues 38-41 is interaction with substrate tRNA; the sequence is DSRL.

This sequence belongs to the IPP transferase family. As to quaternary structure, monomer. It depends on Mg(2+) as a cofactor.

The enzyme catalyses adenosine(37) in tRNA + dimethylallyl diphosphate = N(6)-dimethylallyladenosine(37) in tRNA + diphosphate. Functionally, catalyzes the transfer of a dimethylallyl group onto the adenine at position 37 in tRNAs that read codons beginning with uridine, leading to the formation of N6-(dimethylallyl)adenosine (i(6)A). The sequence is that of tRNA dimethylallyltransferase from Herpetosiphon aurantiacus (strain ATCC 23779 / DSM 785 / 114-95).